Here is a 433-residue protein sequence, read N- to C-terminus: Monodehydroascorbate reductase (433 aa).

FAD contacts are provided by residues glycine 12 to serine 15, glutamate 39, arginine 46, lysine 51, isoleucine 94, and arginine 145 to glutamate 146. Residues glycine 170–glutamate 176, glutamate 194, arginine 200, and glycine 259 contribute to the NAD(+) site. Residue tyrosine 172–glutamate 176 coordinates NADP(+). NADP(+) is bound by residues arginine 200 and glycine 259. Residue aspartate 296 coordinates FAD. Glutamate 312 to histidine 313 is an NAD(+) binding site. Residue glutamate 312–histidine 313 participates in NADP(+) binding. Valine 314 lines the FAD pocket. Residue arginine 318 coordinates L-ascorbate. Tyrosine 347 serves as a coordination point for FAD. Residue tyrosine 347 coordinates NAD(+). Tyrosine 347 contacts NADP(+). Arginine 349 serves as a coordination point for L-ascorbate.

Belongs to the FAD-dependent oxidoreductase family. The cofactor is FAD. In terms of tissue distribution, expressed at relatively low levels in all tissues examined.

It is found in the cytoplasm. The enzyme catalyses 2 monodehydro-L-ascorbate radical + NADH + H(+) = 2 L-ascorbate + NAD(+). Functionally, catalyzes the conversion of monodehydroascorbate to ascorbate, oxidizing NADH in the process. The sequence is that of Monodehydroascorbate reductase from Pisum sativum (Garden pea).